The sequence spans 366 residues: Zinc-regulated GTPase metalloprotein activator 1 (366 aa).

The psi-PxLVp motif signature appears at D5–P12. G31–T38 contributes to the GTP binding site. 3 residues coordinate Zn(2+): C89, C91, and C92. Positions C89–C92 match the CXCC motif motif. GTP contacts are provided by residues C92–D96 and N185–D188. One can recognise a CobW C-terminal domain in the interval T258–S357.

It belongs to the SIMIBI class G3E GTPase family. ZNG1 subfamily.

Its subcellular location is the nucleus. It catalyses the reaction GTP + H2O = GDP + phosphate + H(+). Its function is as follows. Zinc chaperone that directly transfers zinc cofactor to target metalloproteins, thereby activating them. Catalyzes zinc insertion into the active site of methionine aminopeptidase METAP1, which function to cleave the initiator methionine from polypeptides during or after protein translation. Mechanistically, the N-terminal psi-PxLVp motif binds to the C6H2-type zinc finger of inactive form of METAP1. After formation of the docked complex, zinc is transferred from the CXCC motif in the GTPase domain of ZNG1 to the zinc binding site in the peptidase domain of METAP1 in a process requiring GTP hydrolysis. GTP/GDP exchange is required for release of active METAP1. The polypeptide is Zinc-regulated GTPase metalloprotein activator 1 (Danio rerio (Zebrafish)).